The following is a 176-amino-acid chain: Translation initiation factor IF-3 (176 aa).

This sequence belongs to the IF-3 family. As to quaternary structure, monomer.

The protein localises to the cytoplasm. In terms of biological role, IF-3 binds to the 30S ribosomal subunit and shifts the equilibrium between 70S ribosomes and their 50S and 30S subunits in favor of the free subunits, thus enhancing the availability of 30S subunits on which protein synthesis initiation begins. The protein is Translation initiation factor IF-3 of Streptococcus thermophilus (strain ATCC BAA-491 / LMD-9).